The following is a 1943-amino-acid chain: Protocadherin-15 (1943 aa).

The first 26 residues, 1-26, serve as a signal peptide directing secretion; that stretch reads MFLQFAVWKCLPHGILIASLLVVSWG. Residues 27-1381 are Extracellular-facing; the sequence is QYDDDWQYED…GESLGYTEGA (1355 aa). Cysteine 37 and cysteine 125 are oxidised to a cystine. 11 Cadherin domains span residues 45-152, 153-270, 283-400, 401-514, 515-621, 622-722, 724-824, 825-931, 932-1040, 1042-1149, and 1150-1264; these read PATI…SPTF, KHES…GPMF, RPLT…SPYF, TMPS…TPTF, PEIS…PPRF, PQLM…APVF, PYLP…SPVF, TNST…PPVF, SKRI…IPRF, QEEY…PPVF, and QKKF…PPTL. Asparagine 57, asparagine 102, and asparagine 206 each carry an N-linked (GlcNAc...) asparagine glycan. N-linked (GlcNAc...) asparagine glycans are attached at residues asparagine 424, asparagine 564, asparagine 667, asparagine 729, asparagine 773, asparagine 826, and asparagine 856. Residues asparagine 1069, asparagine 1089, and asparagine 1180 are each glycosylated (N-linked (GlcNAc...) asparagine). The chain crosses the membrane as a helical span at residues 1382-1402; sequence LLALAFIIILCCIPAILVVLV. At 1403–1943 the chain is on the cytoplasmic side; that stretch reads SYRQFKVRQA…VQPHSQSTSL (541 aa). Disordered regions lie at residues 1425 to 1453, 1475 to 1533, and 1714 to 1865; these read PAAKPAAPVPAAPAPPPPPPPPPPGAHLY, GNNS…STHN, and ILNS…EPHR. Residues 1431-1449 show a composition bias toward pro residues; that stretch reads APVPAAPAPPPPPPPPPPG. Basic and acidic residues-rich tracts occupy residues 1480–1489 and 1498–1509; these read PEDRSSHRDG and ESHEPAHVEGPL. 2 stretches are compositionally biased toward pro residues: residues 1742-1760 and 1769-1779; these read PHPPSISAPLPHPPLPRPP and PLSPPNPPPPQ. Residues 1784–1795 show a composition bias toward low complexity; that stretch reads SLPISTPPTSSL. Residues 1796 to 1821 are compositionally biased toward pro residues; sequence PLPPPLSLPPPPRPPAPRLFPQPPST. Low complexity predominate over residues 1822 to 1834; it reads SIPSTDSISAPAA. Positions 1846–1858 are enriched in polar residues; that stretch reads TTSTTQPPASNPQ.

Antiparallel heterodimer with CDH23. Found in a complex with TMIE and LHFPL5. Interacts with LHFPL5/TMHS; this interaction is required for efficient localization to hair bundles. Interacts with MYO7A. Interacts with USH1G; this interaction may recruit USH1G to the plasma membrane. Interacts with TOMT. Isoforms CD1 and CD3 interact with TMC1 (via N-terminus) and TMC2 (via N-terminus). Interacts with PIEZO1. Expressed in brain and sensory epithelium of the developing inner ear. Expressed in the retina, in the photoreceptor inner segments, the outer plexiform layer, the inner nuclei layer and the ganglion cell layer and, more diffusely in the inner plexiform layer (at protein level). Not detected in the retinal pigment epithelium (at protein level). Expressed in the spleen, dorsal root ganglion, dorsal aspect of neural tube, floor plate and ependymal cells adjacent to the neural canal.

The protein localises to the cell membrane. It localises to the secreted. Calcium-dependent cell-adhesion protein. Required for inner ear neuroepithelial cell elaboration and cochlear function. Probably involved in the maintenance of normal retinal function. This Mus musculus (Mouse) protein is Protocadherin-15 (Pcdh15).